The following is a 1283-amino-acid chain: Oxysterol-binding protein homolog 2 (1283 aa).

The residue at position 2 (Ser-2) is an N-acetylserine. Phosphoserine is present on Ser-7. ANK repeat units follow at residues 106 to 134 (NGNT…SIND) and 206 to 235 (TGTT…EATV). Residues 289–386 (PPTYKGFLKK…WVNAIQSAIR (98 aa)) form the PH domain. Phosphoserine is present on residues Ser-422, Ser-445, Ser-451, Ser-455, Ser-458, Ser-459, and Ser-486. Thr-488 carries the post-translational modification Phosphothreonine. Polar residues-rich tracts occupy residues 504–518 (SNTL…SGSG) and 530–551 (ANLS…NNYI). Disordered regions lie at residues 504 to 571 (SNTL…LGIN) and 702 to 721 (TAGN…DTTA). Ser-512 and Ser-515 each carry phosphoserine. Over residues 554 to 568 (FEGDEANSDDEEEDL) the composition is skewed to acidic residues. Residues 707–716 (ESLENDKEQE) show a composition bias toward basic and acidic residues. Phosphoserine is present on Ser-717. Residues 745–751 (EFYDAAE) carry the FFAT motif. The disordered stretch occupies residues 767–834 (STAAAPKHAP…SLKNFKAEDK (68 aa)). Thr-783 carries the phosphothreonine modification. Phosphoserine is present on Ser-787. Composition is skewed to basic and acidic residues over residues 791-810 (QDEK…KFEK) and 818-834 (DEPK…AEDK). Phosphoserine is present on residues Ser-825 and Ser-1151. An OSBP-related domain (ORD) region spans residues 897–1268 (SLWAVLKSMV…KYWRYTGKYW (372 aa)).

The protein belongs to the OSBP family. In terms of assembly, interacts with SCS2.

It is found in the cell membrane. It localises to the endoplasmic reticulum membrane. In terms of biological role, lipid transport protein (LTP) involved in non-vesicular transfer of lipids between membranes. Functions in phosphoinositide-coupled directional transport of various lipids by carrying the lipid molecule in a hydrophobic pocket and transferring it between membranes through the cytosol. Involved in maintenance of intracellular sterol distribution and homeostasis. Binds and transports sterol. Plays a role in the positive regulation of vesicular transport of ceramide from the ER to the Golgi, negatively regulating COPII-mediated ER export of cargos. This chain is Oxysterol-binding protein homolog 2, found in Saccharomyces cerevisiae (strain ATCC 204508 / S288c) (Baker's yeast).